A 279-amino-acid polypeptide reads, in one-letter code: S-methyl-5'-thioadenosine phosphorylase (279 aa).

Phosphate-binding positions include S13, R55–H56, and T88–A89. M191 serves as a coordination point for substrate. Residue T192 coordinates phosphate. D215–D217 serves as a coordination point for substrate.

This sequence belongs to the PNP/MTAP phosphorylase family. MTAP subfamily. Homotrimer.

The protein localises to the cytoplasm. Its subcellular location is the nucleus. It carries out the reaction S-methyl-5'-thioadenosine + phosphate = 5-(methylsulfanyl)-alpha-D-ribose 1-phosphate + adenine. The protein operates within amino-acid biosynthesis; L-methionine biosynthesis via salvage pathway; S-methyl-5-thio-alpha-D-ribose 1-phosphate from S-methyl-5'-thioadenosine (phosphorylase route): step 1/1. Catalyzes the reversible phosphorylation of S-methyl-5'-thioadenosine (MTA) to adenine and 5-methylthioribose-1-phosphate. Involved in the breakdown of MTA, a major by-product of polyamine biosynthesis. Responsible for the first step in the methionine salvage pathway after MTA has been generated from S-adenosylmethionine. Has broad substrate specificity with 6-aminopurine nucleosides as preferred substrates. The protein is S-methyl-5'-thioadenosine phosphorylase of Aedes aegypti (Yellowfever mosquito).